Reading from the N-terminus, the 33-residue chain is U-limacoditoxin(13)-As11 (33 aa).

A signal peptide spans 1 to 19 (MFKLLLVLALTMLAQSALA). Phenylalanine 32 is modified (phenylalanine amide).

Belongs to the FARP (FMRFamide related peptide) family. Expressed by the venom secretory cell of the spine. The spine is a cuticular structure containing a single large nucleated venom-secreting cell at its base. It is an independent unit capable of producing, storing and injecting venom. On the back of A.stimulea caterpillars, spines are grouped together by 50 to 100 to form scoli, of which there are eight.

It localises to the secreted. In terms of biological role, is toxic when injected into Drosophila melanogaster. Also shows a low anthelmintic activity against the parasitic nematode H.contortus (drug susceptible Kirby isolate). The polypeptide is U-limacoditoxin(13)-As11 (Acharia stimulea (Saddleback caterpillar moth)).